Here is a 203-residue protein sequence, read N- to C-terminus: A-type ATP synthase subunit E (203 aa).

Belongs to the V-ATPase E subunit family. As to quaternary structure, has multiple subunits with at least A(3), B(3), C, D, E, F, H, I and proteolipid K(x).

The protein resides in the cell membrane. Component of the A-type ATP synthase that produces ATP from ADP in the presence of a proton gradient across the membrane. The polypeptide is A-type ATP synthase subunit E (Desulfurococcus sp. (strain SY)).